The primary structure comprises 282 residues: Heat stress transcription factor A-6a (282 aa).

Residues 17–111 (PTAFLTKTYN…LLKNIKRRKT (95 aa)) mediate DNA binding. The hydrophobic repeat HR-A/B stretch occupies residues 111–177 (TSSQTQTQSL…MMMNFLLKKI (67 aa)). The Bipartite nuclear localization signal motif lies at 175-190 (KKIKKPSFLQSLRKRN). Residues 261-270 (EGIWKGFVLS) carry the AHA motif.

It belongs to the HSF family. Class A subfamily. Homotrimer. Exhibits temperature-dependent phosphorylation.

Its subcellular location is the nucleus. Transcriptional activator that specifically binds DNA sequence 5'-AGAAnnTTCT-3' known as heat shock promoter elements (HSE). The chain is Heat stress transcription factor A-6a (HSFA6A) from Arabidopsis thaliana (Mouse-ear cress).